The chain runs to 118 residues: Holo-[acyl-carrier-protein] synthase (118 aa).

Positions 6 and 55 each coordinate Mg(2+).

The protein belongs to the P-Pant transferase superfamily. AcpS family. Mg(2+) is required as a cofactor.

It is found in the cytoplasm. The catalysed reaction is apo-[ACP] + CoA = holo-[ACP] + adenosine 3',5'-bisphosphate + H(+). Transfers the 4'-phosphopantetheine moiety from coenzyme A to a Ser of acyl-carrier-protein. The sequence is that of Holo-[acyl-carrier-protein] synthase from Chlorobium chlorochromatii (strain CaD3).